The sequence spans 2670 residues: Inositol 1,4,5-trisphosphate-gated calcium channel ITPR3 (2670 aa).

The Cytoplasmic portion of the chain corresponds to 1-2233 (MNEMSSFLHI…YVEGASTGVL (2233 aa)). MIR domains are found at residues 113-173 (GDVV…LRSN), 174-224 (GDNV…INLF), 232-288 (EEVL…VEVV), 295-372 (GGAG…LDPT), and 378-434 (DSFV…IVSV). Residues Arg266, Leu269, and Arg270 each contribute to the 1D-myo-inositol 1,4,5-trisphosphate site. The 1D-myo-inositol 1,4,5-trisphosphate site is built by Arg503, Lys507, Arg510, Tyr567, Arg568, and Lys569. Ca(2+) is bound at residue Arg743. Residues Ser916 and Ser934 each carry the phosphoserine modification. Positions 1122 and 1125 each coordinate Ca(2+). Residues 1138 to 1153 (EVEAGATKDKKERPSD) show a composition bias toward basic and acidic residues. Disordered regions lie at residues 1138–1164 (EVEAGATKDKKERPSDEEGFLQPHGEK) and 1807–1835 (NMSDLGSQPREDREPADPATKGRVSSFSM). Phosphoserine occurs at positions 1813, 1832, and 1834. Ca(2+) contacts are provided by Glu1881 and Glu1945. Ala1995, Glu2148, and Lys2151 together coordinate ATP. The chain crosses the membrane as a helical span at residues 2234–2254 (GSPLISLLFWILICFSIAALF). Residues 2255 to 2262 (TKRYSVRP) are Extracellular-facing. A helical transmembrane segment spans residues 2263–2283 (LIVALILRSIYYLGIGPTLNI). Residues 2284 to 2292 (LGALNLTNK) lie on the Cytoplasmic side of the membrane. A helical membrane pass occupies residues 2293-2310 (IVFVVSFVGNRGTFIRGY). The Extracellular portion of the chain corresponds to 2311-2324 (KAMVMDMEFLYHVG). Residues 2325–2345 (YILTSVLGLFAHELFYSILLF) traverse the membrane as a helical segment. The Cytoplasmic segment spans residues 2346 to 2367 (DLIYREETLFNVIKSVTRNGRS). Residues 2368 to 2388 (ILLTALLALILVYLFSIVGFL) form a helical membrane-spanning segment. Residues 2389–2495 (FLKDDFILEV…ESLFPARVVY (107 aa)) are Extracellular-facing. Cysteines 2454 and 2460 form a disulfide. A helical transmembrane segment spans residues 2496–2516 (DLLFFFIVIIIVLNLIFGVII). Over 2517–2670 (DTFADLRSEK…FVDVQNCMSR (154 aa)) the chain is Cytoplasmic. Residues Cys2537 and Phe2538 each coordinate ATP. Zn(2+) is bound at residue Cys2537. Zn(2+)-binding residues include Cys2540 and His2557. Residues Lys2559, His2562, Asn2563, and Met2564 each coordinate ATP. His2562 is a Zn(2+) binding site. Thr2580 contributes to the Ca(2+) binding site. Phosphoserine occurs at positions 2608 and 2669.

The protein belongs to the InsP3 receptor family. As to quaternary structure, homodimer. Homotetramer. Interacts with TRPC1, TRPC3, TRPC4. Interacts with TRPV4. Interacts with SIGMAR1. Found in a complex with AKT1 and PML; this interaction modulates IP3R3-phosphorylation and in turn ITPR3-dependent calcium release. Interacts with IRAG2 (via coiled-coil domain). Interacts with CABP1. Interacts with TMBIM4/LFG4. Interacts with CEMIP. Interacts with TESPA1. Interacts with TMEM203. Interacts with BOK; regulates ITPR3 expression. Interacts with BCL2L10. Interacts with CHGA and CHGB. In terms of processing, phosphorylated by AKT1 on serine and/or threonine residues.

The protein localises to the endoplasmic reticulum membrane. Its subcellular location is the cytoplasmic vesicle. The protein resides in the secretory vesicle membrane. The enzyme catalyses Ca(2+)(in) = Ca(2+)(out). With respect to regulation, inositol 1,4,5-trisphosphate-gated calcium channel is regulated by cytosolic calcium in a biphasic manner. At low concentrations, cytosolic calcium binds at a high-affinity juxtamembrane domain (JD) calcium binding site, allowing ITPR3 to activate by escaping a low-energy resting state through an ensemble of preactivated states. At high cytosolic calcium concentrations, ITPR3 preferentially enters an inhibited state stabilized by calcium binding at a second, low-affinity cytoplasmic domain (CD) calcium binding site. In terms of biological role, inositol 1,4,5-trisphosphate-gated calcium channel that, upon 1D-myo-inositol 1,4,5-trisphosphate binding, transports calcium from the endoplasmic reticulum lumen to cytoplasm, thus releasing the intracellular calcium and therefore participates in cellular calcium ion homeostasis. 1D-myo-inositol 1,4,5-trisphosphate binds to the ligand-free channel without altering its global conformation, yielding the low-energy resting state, then progresses through resting-to preactivated transitions to the higher energy preactivated state, which increases affinity for calcium, promoting binding of the low basal cytosolic calcium at the juxtamembrane domain (JD) site, favoring the transition through the ensemble of high-energy intermediate states along the trajectory to the fully-open activated state. Upon opening, releases calcium in the cytosol where it can bind to the low-affinity cytoplasmic domain (CD) site and stabilizes the inhibited state to terminate calcium release. The chain is Inositol 1,4,5-trisphosphate-gated calcium channel ITPR3 from Mus musculus (Mouse).